Consider the following 331-residue polypeptide: Small ribosomal subunit protein uS2 (331 aa).

The protein belongs to the universal ribosomal protein uS2 family.

The protein is Small ribosomal subunit protein uS2 of Rhodopseudomonas palustris (strain HaA2).